A 284-amino-acid polypeptide reads, in one-letter code: D-tagatose-1,6-bisphosphate aldolase subunit GatY (284 aa).

Aspartate 82 serves as the catalytic Proton donor. Residues histidine 83 and histidine 180 each contribute to the Zn(2+) site. Position 181 (glycine 181) interacts with dihydroxyacetone phosphate. Histidine 208 serves as a coordination point for Zn(2+). Dihydroxyacetone phosphate contacts are provided by residues 209 to 211 and 230 to 233; these read GAS and NVAT.

Belongs to the class II fructose-bisphosphate aldolase family. TagBP aldolase GatY subfamily. Forms a complex with GatZ. The cofactor is Zn(2+).

The catalysed reaction is D-tagatofuranose 1,6-bisphosphate = D-glyceraldehyde 3-phosphate + dihydroxyacetone phosphate. Its pathway is carbohydrate metabolism; D-tagatose 6-phosphate degradation; D-glyceraldehyde 3-phosphate and glycerone phosphate from D-tagatose 6-phosphate: step 2/2. Its function is as follows. Catalytic subunit of the tagatose-1,6-bisphosphate aldolase GatYZ, which catalyzes the reversible aldol condensation of dihydroxyacetone phosphate (DHAP or glycerone-phosphate) with glyceraldehyde 3-phosphate (G3P) to produce tagatose 1,6-bisphosphate (TBP). Requires GatZ subunit for full activity and stability. Is involved in the catabolism of galactitol. This Escherichia coli (strain 55989 / EAEC) protein is D-tagatose-1,6-bisphosphate aldolase subunit GatY.